Here is a 406-residue protein sequence, read N- to C-terminus: MSASQDSRSRDNGPDGMEPEGVIESNWNEIVDSLDDMNLSESLLRGIYAYGFEKPSAIQQRAILSCIKGYDVIAQAQSGTGKTATFAISILQQIELDLKATQALVLAPTRELAQQIQKVVMALGDYMGASCHACIGGTNVRAEVQKLQMEAPHIIVGTPGRVFDMLNRRYLSPKYIKMFVLDEADEMLSRGFKDQIYDIFQKLNSNTQVVLLSATMPSDVLEVTKKFMRDPIRILVKKEELTLEGIRQFYINVEREEWKLDTLCDLYETLTITQAVIFINTRRKVDWLTEKMHARDFTVSAMHGDMDQKERDVIMREFRSGSSRVLITTDLLARGIDVQQVSLVINYDLPTNRENYIHRIGRGGRFGRKGVAINMVTEEDKRTLRDIETFYNTSIEEMPLNVADLI.

The disordered stretch occupies residues 1–21; the sequence is MSASQDSRSRDNGPDGMEPEG. Ser2 carries the N-acetylserine modification. Position 4 is a phosphoserine (Ser4). The short motif at 32-60 is the Q motif element; it reads DSLDDMNLSESLLRGIYAYGFEKPSAIQQ. Residues 63–234 form the Helicase ATP-binding domain; sequence ILSCIKGYDV…KKFMRDPIRI (172 aa). 76–83 is a binding site for ATP; sequence AQSGTGKT. At Lys118 the chain carries N6-acetyllysine. Lys146 participates in a covalent cross-link: Glycyl lysine isopeptide (Lys-Gly) (interchain with G-Cter in SUMO2). The residue at position 158 (Thr158) is a Phosphothreonine. Lys174 is subject to N6-acetyllysine. Positions 182–185 match the DEAD box motif; the sequence is DEAD. The residue at position 193 (Lys193) is an N6-acetyllysine. Lys225 is covalently cross-linked (Glycyl lysine isopeptide (Lys-Gly) (interchain with G-Cter in SUMO2)). N6-acetyllysine; alternate is present on Lys238. Lys238 is covalently cross-linked (Glycyl lysine isopeptide (Lys-Gly) (interchain with G-Cter in SUMO2); alternate). The region spanning 245-406 is the Helicase C-terminal domain; that stretch reads GIRQFYINVE…EMPLNVADLI (162 aa). Glycyl lysine isopeptide (Lys-Gly) (interchain with G-Cter in SUMO2) cross-links involve residues Lys309, Lys369, and Lys381.

Belongs to the DEAD box helicase family. eIF4A subfamily. EIF4F is a multi-subunit complex, the composition of which varies with external and internal environmental conditions. It is composed of at least EIF4A, EIF4E and EIF4G1/EIF4G3. Interacts with PAIP1, EIF4E and UPF2. Found in a complex with XPO7, EIF4A1, ARHGAP1, VPS26A, VPS29, VPS35 and SFN. May interact with NOM1. Interacts with PDCD4; this interferes with the interaction between EIF4A and EIF4G. Interacts with RBM4. Interacts with DDX3X in an RNA-independent manner. Interacts with PKP1 (via N-terminus); the interaction promotes EIF4A1 recruitment to the cap-dependent translation complex and EIF4A1 ATPase activity.

The protein localises to the cytoplasm. The protein resides in the perinuclear region. Its subcellular location is the cell membrane. It is found in the stress granule. It catalyses the reaction ATP + H2O = ADP + phosphate + H(+). In terms of biological role, ATP-dependent RNA helicase which is a subunit of the eIF4F complex involved in cap recognition and is required for mRNA binding to ribosome. In the current model of translation initiation, eIF4A unwinds RNA secondary structures in the 5'-UTR of mRNAs which is necessary to allow efficient binding of the small ribosomal subunit, and subsequent scanning for the initiator codon. As a result, promotes cell proliferation and growth. This chain is Eukaryotic initiation factor 4A-I (EIF4A1), found in Pongo abelii (Sumatran orangutan).